A 212-amino-acid chain; its full sequence is Acyl-homoserine-lactone synthase (212 aa).

This sequence belongs to the autoinducer synthase family.

The enzyme catalyses a fatty acyl-[ACP] + S-adenosyl-L-methionine = an N-acyl-L-homoserine lactone + S-methyl-5'-thioadenosine + holo-[ACP] + H(+). Required for the synthesis of OHHL (N-(3-oxohexanoyl)-L-homoserine lactone), an autoinducer molecule which binds to ExpR and thus acts in virulence (soft rot disease) through the activation of genes for plant tissue macerating enzymes. The sequence is that of Acyl-homoserine-lactone synthase (expI) from Dickeya dadantii (strain 3937) (Erwinia chrysanthemi (strain 3937)).